Here is a 1489-residue protein sequence, read N- to C-terminus: DEAD-box ATP-dependent DNA helicase Fancm (1489 aa).

The 173-residue stretch at 65–237 folds into the Helicase ATP-binding domain; that stretch reads IVQSALFKNT…AVCRNLYISN (173 aa). 78–85 lines the ATP pocket; that stretch reads LPTGLGKT. The DEAH box motif lies at 185–188; that stretch reads DEAH. The Helicase C-terminal domain occupies 418 to 584; sequence KLRQVLVQHF…VVKLSLYEQN (167 aa). Disordered regions lie at residues 591 to 647, 980 to 1000, 1145 to 1182, 1196 to 1222, 1255 to 1293, and 1452 to 1489; these read KFQP…ESQQ, VEES…ESNH, TETI…PQGK, VLPC…SIQE, NPTI…PQIA, and ERRK…VLID. Residues 594 to 610 are compositionally biased toward basic and acidic residues; it reads PKCEEKHMEPVAEEKPK. The segment covering 611-625 has biased composition (basic residues); it reads PKSAAKTKESRKRKQ. Positions 985–998 are enriched in polar residues; the sequence is RSTPISIADSSGES. The segment covering 1149 to 1161 has biased composition (basic and acidic residues); it reads KNSENKNSHEDGS. Acidic residues predominate over residues 1480–1489; the sequence is SDEDDVVLID.

This sequence belongs to the DEAD box helicase family. DEAH subfamily. FANCM sub-subfamily.

It localises to the nucleus. It carries out the reaction ATP + H2O = ADP + phosphate + H(+). The catalysed reaction is Couples ATP hydrolysis with the unwinding of duplex DNA by translocating in the 3'-5' direction.. A ssDNA-dependent ATPase with 3' to 5' helicase activity. Involved in multiple DNA-damage responses, some that require ATPase and helicase activity and some that are independent of these. Involved in DNA interstrand cross-link repair, probably together with Fancl and other Fanconi anemia pathway homologs. Independent of Fancl involved in DNA double strand break repair, including contributing to the synthesis-dependent strand annealing (SDSA) pathway. Probably contributes to SDSA by unwinding short duplex regions in complex D-loop-like DNA structures. In Drosophila melanogaster (Fruit fly), this protein is DEAD-box ATP-dependent DNA helicase Fancm.